Reading from the N-terminus, the 1273-residue chain is Kinesin-like protein KIN-7O (1273 aa).

The 325-residue stretch at 3 to 327 folds into the Kinesin motor domain; it reads RIHVSVRARP…LQFASRALRV (325 aa). 79 to 86 serves as a coordination point for ATP; it reads GQTNSGKT. Positions 333 to 408 form a coiled coil; sequence VNEILTDAAL…QRERVLQEQA (76 aa). Residues 452-474 form a disordered region; sequence SEDQSNVLSRGSSLESARSERET. A compositionally biased stretch (polar residues) spans 453–467; it reads EDQSNVLSRGSSLES. Coiled coils occupy residues 602 to 674 and 751 to 1023; these read EAIL…ESEV and VQSS…MEEE.

This sequence belongs to the TRAFAC class myosin-kinesin ATPase superfamily. Kinesin family. KIN-7 subfamily.

This Arabidopsis thaliana (Mouse-ear cress) protein is Kinesin-like protein KIN-7O.